A 95-amino-acid chain; its full sequence is Aspartyl/glutamyl-tRNA(Asn/Gln) amidotransferase subunit C (95 aa).

This sequence belongs to the GatC family. Heterotrimer of A, B and C subunits.

It catalyses the reaction L-glutamyl-tRNA(Gln) + L-glutamine + ATP + H2O = L-glutaminyl-tRNA(Gln) + L-glutamate + ADP + phosphate + H(+). The catalysed reaction is L-aspartyl-tRNA(Asn) + L-glutamine + ATP + H2O = L-asparaginyl-tRNA(Asn) + L-glutamate + ADP + phosphate + 2 H(+). In terms of biological role, allows the formation of correctly charged Asn-tRNA(Asn) or Gln-tRNA(Gln) through the transamidation of misacylated Asp-tRNA(Asn) or Glu-tRNA(Gln) in organisms which lack either or both of asparaginyl-tRNA or glutaminyl-tRNA synthetases. The reaction takes place in the presence of glutamine and ATP through an activated phospho-Asp-tRNA(Asn) or phospho-Glu-tRNA(Gln). The sequence is that of Aspartyl/glutamyl-tRNA(Asn/Gln) amidotransferase subunit C from Methylobacterium radiotolerans (strain ATCC 27329 / DSM 1819 / JCM 2831 / NBRC 15690 / NCIMB 10815 / 0-1).